A 100-amino-acid polypeptide reads, in one-letter code: Urease subunit gamma (100 aa).

It belongs to the urease gamma subunit family. In terms of assembly, heterotrimer of UreA (gamma), UreB (beta) and UreC (alpha) subunits. Three heterotrimers associate to form the active enzyme.

Its subcellular location is the cytoplasm. The catalysed reaction is urea + 2 H2O + H(+) = hydrogencarbonate + 2 NH4(+). It participates in nitrogen metabolism; urea degradation; CO(2) and NH(3) from urea (urease route): step 1/1. The sequence is that of Urease subunit gamma from Blochmanniella floridana.